Consider the following 415-residue polypeptide: Fructose-like permease IIC component (415 aa).

Residues methionine 1–methionine 46 lie on the Cytoplasmic side of the membrane. Positions leucine 35–leucine 415 constitute a PTS EIIC type-2 domain. The helical transmembrane segment at valine 47–tryptophan 67 threads the bilayer. Topologically, residues leucine 68–serine 101 are periplasmic. The helical transmembrane segment at phenylalanine 102–isoleucine 122 threads the bilayer. Residues glycine 123 to leucine 126 are Cytoplasmic-facing. A helical membrane pass occupies residues alanine 127–phenylalanine 147. Over aspartate 148–serine 157 the chain is Periplasmic. A helical transmembrane segment spans residues serine 158–valine 178. Over lysine 179–threonine 197 the chain is Cytoplasmic. Residues phenylalanine 198 to proline 218 traverse the membrane as a helical segment. The Periplasmic segment spans residues phenylalanine 219–lysine 237. Residues glycine 238–isoleucine 258 traverse the membrane as a helical segment. At asparagine 259–proline 276 the chain is on the cytoplasmic side. The helical transmembrane segment at valine 277 to isoleucine 297 threads the bilayer. Residues aspartate 298–alanine 318 lie on the Periplasmic side of the membrane. A helical transmembrane segment spans residues methionine 319 to isoleucine 339. The Cytoplasmic portion of the chain corresponds to threonine 340 to alanine 341. The helical transmembrane segment at isoleucine 342–valine 362 threads the bilayer. The Periplasmic portion of the chain corresponds to glutamine 363–asparagine 378. The chain crosses the membrane as a helical span at residues leucine 379–phenylalanine 399. The Cytoplasmic portion of the chain corresponds to leucine 400–leucine 415.

It localises to the cell inner membrane. In terms of biological role, the phosphoenolpyruvate-dependent sugar phosphotransferase system (PTS), a major carbohydrate active -transport system, catalyzes the phosphorylation of incoming sugar substrates concomitant with their translocation across the cell membrane. The polypeptide is Fructose-like permease IIC component (fryC) (Shigella flexneri).